A 506-amino-acid chain; its full sequence is Exoglucanase (506 aa).

The first 18 residues, 1 to 18 (MFPRSILLALSLTAVALG), serve as a signal peptide directing secretion. The catalytic stretch occupies residues 19–450 (QQVGTNMAEN…IKFGDINSTF (432 aa)). Glutamate 227 acts as the Nucleophile in catalysis. Catalysis depends on glutamate 232, which acts as the Proton donor. Asparagine 308 is a glycosylation site (N-linked (GlcNAc...) asparagine). The disordered stretch occupies residues 405–426 (ASPSQPGISRGTCSRDSGKPED). The segment covering 406–419 (SPSQPGISRGTCSR) has biased composition (polar residues). An N-linked (GlcNAc...) asparagine glycan is attached at asparagine 447. The disordered stretch occupies residues 449–472 (TFNNNGGGGGNPSPTTTRPNSPAQ). The interval 451–473 (NNNGGGGGNPSPTTTRPNSPAQT) is linker. Over residues 460–470 (PSPTTTRPNSP) the composition is skewed to low complexity. The region spanning 470-506 (PAQTMWGQCGGQGWTGPTACQSPSTCHVINDFYSQCF) is the CBM1 domain. Disulfide bonds link cysteine 478/cysteine 495 and cysteine 489/cysteine 505.

Belongs to the glycosyl hydrolase 7 (cellulase C) family.

The enzyme catalyses Hydrolysis of (1-&gt;4)-beta-D-glucosidic linkages in cellulose and cellotetraose, releasing cellobiose from the non-reducing ends of the chains.. Its function is as follows. The biological conversion of cellulose to glucose generally requires three types of hydrolytic enzymes: (1) Endoglucanases which cut internal beta-1,4-glucosidic bonds; (2) Exocellobiohydrolases that cut the disaccharide cellobiose from the non-reducing end of the cellulose polymer chain; (3) Beta-1,4-glucosidases which hydrolyze the cellobiose and other short cello-oligosaccharides to glucose. In Agaricus bisporus (White button mushroom), this protein is Exoglucanase (cel2).